We begin with the raw amino-acid sequence, 383 residues long: Queuine tRNA-ribosyltransferase (383 aa).

Asp95 (proton acceptor) is an active-site residue. Residues 95-99, Asp149, Gln195, and Gly222 contribute to the substrate site; that span reads DSGGF. The RNA binding stretch occupies residues 253–259; the sequence is GVGSPDS. Asp272 acts as the Nucleophile in catalysis. Residues 277 to 281 form an RNA binding; important for wobble base 34 recognition region; the sequence is TRIAR. Cys310, Cys312, Cys315, and His341 together coordinate Zn(2+).

Belongs to the queuine tRNA-ribosyltransferase family. Homodimer. Within each dimer, one monomer is responsible for RNA recognition and catalysis, while the other monomer binds to the replacement base PreQ1. Zn(2+) serves as cofactor.

It catalyses the reaction 7-aminomethyl-7-carbaguanine + guanosine(34) in tRNA = 7-aminomethyl-7-carbaguanosine(34) in tRNA + guanine. The protein operates within tRNA modification; tRNA-queuosine biosynthesis. Its function is as follows. Catalyzes the base-exchange of a guanine (G) residue with the queuine precursor 7-aminomethyl-7-deazaguanine (PreQ1) at position 34 (anticodon wobble position) in tRNAs with GU(N) anticodons (tRNA-Asp, -Asn, -His and -Tyr). Catalysis occurs through a double-displacement mechanism. The nucleophile active site attacks the C1' of nucleotide 34 to detach the guanine base from the RNA, forming a covalent enzyme-RNA intermediate. The proton acceptor active site deprotonates the incoming PreQ1, allowing a nucleophilic attack on the C1' of the ribose to form the product. After dissociation, two additional enzymatic reactions on the tRNA convert PreQ1 to queuine (Q), resulting in the hypermodified nucleoside queuosine (7-(((4,5-cis-dihydroxy-2-cyclopenten-1-yl)amino)methyl)-7-deazaguanosine). This Shouchella clausii (strain KSM-K16) (Alkalihalobacillus clausii) protein is Queuine tRNA-ribosyltransferase.